The following is a 440-amino-acid chain: Thymidine phosphorylase (440 aa).

It belongs to the thymidine/pyrimidine-nucleoside phosphorylase family. In terms of assembly, homodimer.

The catalysed reaction is thymidine + phosphate = 2-deoxy-alpha-D-ribose 1-phosphate + thymine. The protein operates within pyrimidine metabolism; dTMP biosynthesis via salvage pathway; dTMP from thymine: step 1/2. The enzymes which catalyze the reversible phosphorolysis of pyrimidine nucleosides are involved in the degradation of these compounds and in their utilization as carbon and energy sources, or in the rescue of pyrimidine bases for nucleotide synthesis. The chain is Thymidine phosphorylase from Yersinia pestis.